The chain runs to 91 residues: Elongation factor 1-beta (91 aa).

The protein belongs to the EF-1-beta/EF-1-delta family.

Functionally, promotes the exchange of GDP for GTP in EF-1-alpha/GDP, thus allowing the regeneration of EF-1-alpha/GTP that could then be used to form the ternary complex EF-1-alpha/GTP/AAtRNA. This is Elongation factor 1-beta from Metallosphaera sedula (strain ATCC 51363 / DSM 5348 / JCM 9185 / NBRC 15509 / TH2).